The following is a 330-amino-acid chain: D-cysteine desulfhydrase (330 aa).

Residue lysine 52 is modified to N6-(pyridoxal phosphate)lysine.

It belongs to the ACC deaminase/D-cysteine desulfhydrase family. As to quaternary structure, homodimer. It depends on pyridoxal 5'-phosphate as a cofactor.

It catalyses the reaction D-cysteine + H2O = hydrogen sulfide + pyruvate + NH4(+) + H(+). In terms of biological role, catalyzes the alpha,beta-elimination reaction of D-cysteine and of several D-cysteine derivatives. It could be a defense mechanism against D-cysteine. This Yersinia enterocolitica serotype O:8 / biotype 1B (strain NCTC 13174 / 8081) protein is D-cysteine desulfhydrase.